Consider the following 268-residue polypeptide: Ribosomal RNA small subunit methyltransferase A (268 aa).

S-adenosyl-L-methionine contacts are provided by Asn-18, Leu-20, Gly-45, Glu-66, Asp-91, and Asn-112.

It belongs to the class I-like SAM-binding methyltransferase superfamily. rRNA adenine N(6)-methyltransferase family. RsmA subfamily.

The protein localises to the cytoplasm. It catalyses the reaction adenosine(1518)/adenosine(1519) in 16S rRNA + 4 S-adenosyl-L-methionine = N(6)-dimethyladenosine(1518)/N(6)-dimethyladenosine(1519) in 16S rRNA + 4 S-adenosyl-L-homocysteine + 4 H(+). In terms of biological role, specifically dimethylates two adjacent adenosines (A1518 and A1519) in the loop of a conserved hairpin near the 3'-end of 16S rRNA in the 30S particle. May play a critical role in biogenesis of 30S subunits. The polypeptide is Ribosomal RNA small subunit methyltransferase A (Shewanella frigidimarina (strain NCIMB 400)).